We begin with the raw amino-acid sequence, 85 residues long: SKP1-like protein 6 (85 aa).

The interval 65-85 is interaction with the F-box domain of F-box proteins; it reads MMAANYLNIQSLLDLTFSNCR.

Belongs to the SKP1 family. In terms of assembly, part of a SCF (SKP1-cullin-F-box) protein ligase complex.

It localises to the nucleus. Its pathway is protein modification; protein ubiquitination. Its function is as follows. Involved in ubiquitination and subsequent proteasomal degradation of target proteins. Together with CUL1, RBX1 and a F-box protein, it forms a SCF E3 ubiquitin ligase complex. The functional specificity of this complex depends on the type of F-box protein. In the SCF complex, it serves as an adapter that links the F-box protein to CUL1. The chain is SKP1-like protein 6 (ASK6) from Arabidopsis thaliana (Mouse-ear cress).